The primary structure comprises 127 residues: Aspartate 1-decarboxylase (127 aa).

S25 functions as the Schiff-base intermediate with substrate; via pyruvic acid in the catalytic mechanism. S25 carries the post-translational modification Pyruvic acid (Ser). T57 provides a ligand contact to substrate. Y58 functions as the Proton donor in the catalytic mechanism. 73-75 (GAA) serves as a coordination point for substrate.

This sequence belongs to the PanD family. As to quaternary structure, heterooctamer of four alpha and four beta subunits. The cofactor is pyruvate. Is synthesized initially as an inactive proenzyme, which is activated by self-cleavage at a specific serine bond to produce a beta-subunit with a hydroxyl group at its C-terminus and an alpha-subunit with a pyruvoyl group at its N-terminus.

It is found in the cytoplasm. It catalyses the reaction L-aspartate + H(+) = beta-alanine + CO2. It participates in cofactor biosynthesis; (R)-pantothenate biosynthesis; beta-alanine from L-aspartate: step 1/1. Catalyzes the pyruvoyl-dependent decarboxylation of aspartate to produce beta-alanine. This chain is Aspartate 1-decarboxylase, found in Staphylococcus aureus (strain bovine RF122 / ET3-1).